Here is a 306-residue protein sequence, read N- to C-terminus: Probable histidinol-phosphatase (306 aa).

This sequence belongs to the PHP hydrolase family. HisK subfamily.

The catalysed reaction is L-histidinol phosphate + H2O = L-histidinol + phosphate. Its pathway is amino-acid biosynthesis; L-histidine biosynthesis; L-histidine from 5-phospho-alpha-D-ribose 1-diphosphate: step 8/9. This chain is Probable histidinol-phosphatase, found in Schizosaccharomyces pombe (strain 972 / ATCC 24843) (Fission yeast).